A 317-amino-acid chain; its full sequence is Probable cell division protein WhiA (317 aa).

A DNA-binding region (H-T-H motif) is located at residues 276-310; the sequence is TLKELGEMVSGGKISKSGINHRLRKIDDIAEKLRA.

The protein belongs to the WhiA family.

Its function is as follows. Involved in cell division and chromosome segregation. The chain is Probable cell division protein WhiA from Bacillus thuringiensis (strain Al Hakam).